The primary structure comprises 310 residues: ADP-L-glycero-D-manno-heptose-6-epimerase (310 aa).

Residues 10–11 (FI), 31–32 (DN), K38, K53, 75–79 (EGACS), and N92 contribute to the NADP(+) site. The Proton acceptor role is filled by Y140. NADP(+) is bound at residue K144. N169 serves as a coordination point for substrate. V170 and K178 together coordinate NADP(+). The Proton acceptor role is filled by K178. Substrate contacts are provided by residues S180, H187, 201 to 204 (FEGS), R209, and Y272.

This sequence belongs to the NAD(P)-dependent epimerase/dehydratase family. HldD subfamily. Homopentamer. NADP(+) is required as a cofactor.

It carries out the reaction ADP-D-glycero-beta-D-manno-heptose = ADP-L-glycero-beta-D-manno-heptose. Its pathway is nucleotide-sugar biosynthesis; ADP-L-glycero-beta-D-manno-heptose biosynthesis; ADP-L-glycero-beta-D-manno-heptose from D-glycero-beta-D-manno-heptose 7-phosphate: step 4/4. Catalyzes the interconversion between ADP-D-glycero-beta-D-manno-heptose and ADP-L-glycero-beta-D-manno-heptose via an epimerization at carbon 6 of the heptose. This chain is ADP-L-glycero-D-manno-heptose-6-epimerase, found in Salmonella dublin (strain CT_02021853).